The following is a 70-amino-acid chain: Protein SlyX homolog (70 aa).

It belongs to the SlyX family.

The chain is Protein SlyX homolog from Shewanella baltica (strain OS155 / ATCC BAA-1091).